Reading from the N-terminus, the 518-residue chain is OTU domain-containing protein 5 (518 aa).

Disordered regions lie at residues 1-79 and 105-144; these read MTIL…SGGA and PGHS…ETAA. Residues 39 to 53 are compositionally biased toward pro residues; sequence SSPPPRWAYPGNPAP. The span at 116–125 shows a compositional bias: low complexity; it reads SAGPGAPGSS. An OTU domain is found at 171 to 294; the sequence is FIIKQMKEDG…NIHYNSVVNP (124 aa). Residues 176–182 are cys-loop; the sequence is MKEDGAC. Aspartate 179 is an active-site residue. Cysteine 182 serves as the catalytic Nucleophile. Positions 231 to 241 are variable-loop; the sequence is KRKNNCHGNHI. A his-loop region spans residues 282–287; the sequence is YHRNIH. Histidine 287 is an active-site residue. A disordered region spans residues 371–450; that stretch reads ARQPRKASAT…GPSNQTCAGA (80 aa). Low complexity predominate over residues 377–390; the sequence is ASATCSSATAAASS.

The protein belongs to the peptidase C85 family.

It catalyses the reaction Thiol-dependent hydrolysis of ester, thioester, amide, peptide and isopeptide bonds formed by the C-terminal Gly of ubiquitin (a 76-residue protein attached to proteins as an intracellular targeting signal).. Functionally, deubiquitinating enzyme that may function as negative regulator of the innate immune system. Has peptidase activity towards 'Lys-48'- and 'Lys-63'-linked polyubiquitin chains. Can also cleave 'Lys-11'-linked ubiquitin chains (in vitro). The protein is OTU domain-containing protein 5 (otud5) of Xenopus tropicalis (Western clawed frog).